The following is a 608-amino-acid chain: MQRSRASSTSSGRLQASQQVQPLDAPKIIVIHPGSQHLRIGRACDLNPLTMLHAVAYKRKHQEGDWPYHDPMLPSLDNINPAQLQVEFEEQRLIASRILQNCVIDDKQRLRVATPPQQLAHFNRKSVAEKIPPPGNLSEERNRQWLDRDAPVLFDEQILRLSTFDARDYDIHFPIQRGELNVHKQKGGSLQCTLQHIERIWSYALEARLKINLRDLRTHSAVLVVNDVYVRRHLREFMTLLLQRLGFQRCFLVQDSVASTYGAGIGFGCVVDIGAQKTSIACIEDGISQLNSRVRLQYGGGDINQVLLMLLRKCGFPYRECSVQDSYVDARLMDKLKERFCHLNAKVCGAQEKQFHLRKQNGQWLRYTLQVGDEAIMAPLAFFHTELLNITGKARKAFTQQPPQEQYDCEDCFDAEYLRETGRKNGARAADPIVAQLLAQPRPLPPITADDEELNVVDQDEPSSNGVAVHNTSSPSVGHAQKHFADTANGVYQYGQGQVMPLDQAVLEAIGRCATNETKRKMYGSILLVGSSVKIPGLAAWLQSCISQQVQPGTEVNVFTKGMDAGMVAWKGAAIMSVLESARELWITQVDWSRHGLRLLRERSPFLW.

Residues 1–20 form a disordered region; sequence MQRSRASSTSSGRLQASQQV. Position 272–275 (272–275) interacts with ATP; that stretch reads DIGA.

It belongs to the actin family. ARP8 subfamily. Component of the chromatin remodeling Ino80 complex. Exists as monomers and dimers, but the dimer is most probably the biologically relevant form required for stable interactions with histones that exploits the twofold symmetry of the nucleosome core.

Its subcellular location is the nucleus. Its function is as follows. Plays an important role in the functional organization of mitotic chromosomes. Exhibits low basal ATPase activity, and unable to polymerize. Proposed core component of the chromatin remodeling INO80 complex which is involved in transcriptional regulation, DNA replication and probably DNA repair. Strongly prefer nucleosomes and H3-H4 tetramers over H2A-H2B dimers, suggesting it may act as a nucleosome recognition module within the complex. The polypeptide is Actin-related protein 8 (Drosophila pseudoobscura pseudoobscura (Fruit fly)).